Here is a 609-residue protein sequence, read N- to C-terminus: D-apionate lactonase (609 aa).

It catalyses the reaction D-apionolactone + H2O = D-apionate + H(+). The protein operates within carbohydrate metabolism. In terms of biological role, involved in catabolism of D-apiose. Hydrolyzes D-apionolactone to D-apionate. This Brucella anthropi (strain ATCC 49188 / DSM 6882 / CCUG 24695 / JCM 21032 / LMG 3331 / NBRC 15819 / NCTC 12168 / Alc 37) (Ochrobactrum anthropi) protein is D-apionate lactonase.